The sequence spans 331 residues: MKKPVVIGLVIAAIVAVIAGGTWWYQSRQDDGLTLYGNVDIRTVNISFRVGGRLASLNVDEGDTIKAGQVLGELDHAPYENALMQAKAGVSVAQAQYDLMLAGYRDEEIAQAAAAVRQAQAAYDYAQNFYNRQQGLWKSRTISANDLENARSSRDQAQATLKSAQDKLSQYRTGNREQDIAQAKASLEQAKAQLAQAQLDLQDTTLIAPANGTLLTRAVEPGSMLNAGSTVLTLSLTRPVWVRAYVDERNLSQTQPGRDILLYTDGRPDKPYHGKIGFVSPTAEFTPKTVETPDLRTDLVYRLRIIVTDADDALRQGMPVTVKFNDEARHE.

Residues 1 to 19 (MKKPVVIGLVIAAIVAVIA) form the signal peptide. Residues 140–209 (RTISANDLEN…DLQDTTLIAP (70 aa)) are a coiled coil.

It belongs to the UPF0194 family.

It is found in the periplasm. This Salmonella typhi protein is UPF0194 membrane protein YbhG (ybhG).